Reading from the N-terminus, the 187-residue chain is Serine/arginine-rich splicing factor RSZ21 (187 aa).

Residues 2 to 73 (TRVYVGNLDP…WRVELSHKDK (72 aa)) form the RRM domain. Disordered stretches follow at residues 68–89 (LSHKDKGGRGGGGGRRGGIEDS) and 105–187 (RRGR…ANGV). A CCHC-type zinc finger spans residues 89-106 (SKCYECGELGHFARECRR). Over residues 107–122 (GRGSVRRRSPSPRRRR) the composition is skewed to basic residues. Ser123, Ser132, Ser134, Ser140, Ser146, and Ser159 each carry phosphoserine. Positions 136-155 (RGRRSPPRRRSVTPPRRGRS) are enriched in basic residues. Positions 165–177 (SRRDSPRRRDSPY) are enriched in basic and acidic residues. A compositionally biased stretch (low complexity) spans 178 to 187 (GRRSPYANGV). Ser181 carries the phosphoserine modification.

The protein belongs to the splicing factor SR family. RSZ subfamily. As to quaternary structure, component of the spliceosome. Interacts with SNRNP35, AFC2, CYP59, RS2Z33 and RNU1. Interacts with MOS14. Post-translationally, extensively phosphorylated on serine residues in the RS domain. Phosphorylated by AFC2. In terms of tissue distribution, expressed in roots, leaves, flowers and siliques.

It localises to the nucleus speckle. In terms of biological role, probably involved in intron recognition and spliceosome assembly. This chain is Serine/arginine-rich splicing factor RSZ21 (RSZ21), found in Arabidopsis thaliana (Mouse-ear cress).